We begin with the raw amino-acid sequence, 131 residues long: Small ribosomal subunit protein uS11 (131 aa).

This sequence belongs to the universal ribosomal protein uS11 family. In terms of assembly, part of the 30S ribosomal subunit.

Its function is as follows. Located on the platform of the 30S subunit. This is Small ribosomal subunit protein uS11 from Methanospirillum hungatei JF-1 (strain ATCC 27890 / DSM 864 / NBRC 100397 / JF-1).